Reading from the N-terminus, the 303-residue chain is Kynurenine formamidase (303 aa).

Positions 95 to 99 match the HGGXW motif; it reads HGGYW. The Nucleophile role is filled by Ser164. Catalysis depends on residues Asp247 and His279.

This sequence belongs to the kynurenine formamidase family. Homodimer.

It localises to the cytoplasm. The protein resides in the cytosol. Its subcellular location is the nucleus. The catalysed reaction is N-formyl-L-kynurenine + H2O = L-kynurenine + formate + H(+). The protein operates within amino-acid degradation; L-tryptophan degradation via kynurenine pathway; L-kynurenine from L-tryptophan: step 2/2. In terms of biological role, catalyzes the hydrolysis of N-formyl-L-kynurenine to L-kynurenine, the second step in the kynurenine pathway of tryptophan degradation. Kynurenine may be further oxidized to nicotinic acid, NAD(H) and NADP(H). Required for elimination of toxic metabolites. The protein is Kynurenine formamidase of Homo sapiens (Human).